Reading from the N-terminus, the 89-residue chain is Small ribosomal subunit protein uS15 (89 aa).

The protein belongs to the universal ribosomal protein uS15 family. Part of the 30S ribosomal subunit. Forms a bridge to the 50S subunit in the 70S ribosome, contacting the 23S rRNA.

In terms of biological role, one of the primary rRNA binding proteins, it binds directly to 16S rRNA where it helps nucleate assembly of the platform of the 30S subunit by binding and bridging several RNA helices of the 16S rRNA. Functionally, forms an intersubunit bridge (bridge B4) with the 23S rRNA of the 50S subunit in the ribosome. The polypeptide is Small ribosomal subunit protein uS15 (Vibrio atlanticus (strain LGP32) (Vibrio splendidus (strain Mel32))).